The primary structure comprises 400 residues: MDPNLDQDTLPTHEEIDNDVDSAEEEPPEPPLLPDDIDDDDSHGSRTRRQVKPPPELLRAVGACLISGHYDGGNYFRWQQSIAALYAKAGYAGDIRFHQAAIQEYALDPVLPAPRVSYDLLVAHAGLRYQALLNEQLRTGKTPPADEALKDAVRKAAQAAYDNAVKTGDYTPLIDIAFKGVDINKHASDVAQLAKMSVTMDGTHIKFTAGEMPKDKVITSNSMASPNTVMNILNLITTSANVTAVTCGIEFAIACAHQGSSRYTRHTGTSTGGSTFELIAAHVKEHCTIRQFCSYFAKVVWNHLLTHATPPVNWAKHGFTLDSRYAAFDFFDAVTNAAALPPKNGLIRAPTSEEIRAHNLNAHLLINASRQDDQVSSSAQYTAAIAQAGGFKRPQIGWGE.

A compositionally biased stretch (polar residues) spans 1-10 (MDPNLDQDTL). The tract at residues 1–54 (MDPNLDQDTLPTHEEIDNDVDSAEEEPPEPPLLPDDIDDDDSHGSRTRRQVKPP) is disordered. The segment covering 16–28 (IDNDVDSAEEEPP) has biased composition (acidic residues).

The protein belongs to the potexvirus capsid protein family.

The protein localises to the virion. Required for genome encapsidation. The sequence is that of Capsid protein (ORF3) from Botryotinia fuckeliana (Noble rot fungus).